The primary structure comprises 484 residues: MDNSSGQNSRTASSASTSKIVNYSSPVSPGVAAATSSSSSSSSSGMSSSQEDTVLGLFTPKKEFPNAKMLQTIREKLMTPGGACDLLALGIAAEPTDQQPVKLIQQRYLISAQPSHISAAVAAKTPASYRHLVDLTASNLRCVDIFTGEQFLCRIVNEPLHKVQRAYFQLQQHDEELRRSTIYGHPLIRPVHDIIPLTKDRTYILIAPVPQERDSTGGVTGVYENLHTYIRHAKRLCETEARAIFHQICQTVQVCHRNGIILRDLKLKRFYFIDEARTKLQYESLEGSMILDGEDDTLSDKIGCPLYTAPELLCPQQTYKGKPADMWSLGVILYTMLVGQYPFYEKANCNLITVIRHGNVQIPLTLSKSVRWLLLSLLRKDYTERMTASHIFLTPWLREQRPFHMYLPVDVEVAEDWSDAEEDEGTAADAMDDDEEGLCPLGDKHEYEDIGVEPLDYTRSTLQMAQNANGLSTEPEPDTDVDMG.

A compositionally biased stretch (polar residues) spans 1 to 23 (MDNSSGQNSRTASSASTSKIVNY). Positions 1–51 (MDNSSGQNSRTASSASTSKIVNYSSPVSPGVAAATSSSSSSSSSGMSSSQE) are disordered. A compositionally biased stretch (low complexity) spans 24-49 (SSPVSPGVAAATSSSSSSSSSGMSSS). Residues 129 to 397 (YRHLVDLTAS…ASHIFLTPWL (269 aa)) enclose the Protein kinase domain. 2 stretches are compositionally biased toward acidic residues: residues 420 to 437 (AEED…DEEG) and 475 to 484 (PEPDTDVDMG). 2 disordered regions span residues 420 to 443 (AEED…PLGD) and 464 to 484 (MAQN…VDMG).

It belongs to the protein kinase superfamily. CAMK Ser/Thr protein kinase family. Tribbles subfamily. Interacts with slbo. Interacts with Akt1. In terms of tissue distribution, expressed throughout the brain with highest levels of expression detected in the cell body rind and lower levels of expression detected in the neurophil (at protein level).

The protein resides in the nucleus. Its subcellular location is the cytoplasm. It is found in the cell cortex. Its function is as follows. Adapter protein that negatively regulates different signaling pathways to coordinate cell differentiation, proliferation, migration and growth. Functions by binding to key regulatory proteins and either blocks their activity or regulates their turnover by the proteasome. In various developing tissues functions as a cell cycle regulator that mediates cell proliferation according to the requirements of the developmental program. Acts by inducing the proteasomal degradation of the CD25 mitotic activators stg and twe at critical stages of development to delay entry into mitosis and thus mediate cell proliferation. During gastrulation, negatively regulates stg to delay mitosis in the ventral region of the embryonic mesoderm thus allowing invagination to be completed before cell division takes place. Delaying stg-dependent mitosis during bristle development and in migrating germline pole cells also arrests their cell divisions, whereas in cystocytes it promotes their cell divisions. Involved in the regulation of the mid-blastula transition; promotes the destruction of twe resulting in the cell cycle arrest in G2 of cycle 14 which delays mitosis and thus reduces cell proliferation allowing cell fate specification and morphogenesis to take place. In germline cells, blocks border cell migration during oogenesis by binding to slbo/C/EBP and promoting its ubiquitination and degradation by the proteasome. May function in a negative feedback loop with slbo to coordinate proper border cell migration. During tissue growth negatively regulates insulin signaling by binding to Akt1 and blocking its phosphorylation-dependent activation. However it may also function downstream in the insulin signaling pathway, acting with Akt1 to direct foxo degradation. Essential for the proper formation of operant place and aversive olfactory memories. In Drosophila melanogaster (Fruit fly), this protein is Tribbles.